We begin with the raw amino-acid sequence, 511 residues long: Probable G-protein coupled receptor 101 (511 aa).

Topologically, residues 1 to 35 (MPPSCTNSTQENNGSRVCLPLSKMPISVAHGIIRS) are extracellular. 2 N-linked (GlcNAc...) asparagine glycosylation sites follow: asparagine 7 and asparagine 13. A helical membrane pass occupies residues 36 to 56 (VVLLVILGVAFLGNVVLGYVL). Residues 57 to 67 (HRKPNLLQVTN) lie on the Cytoplasmic side of the membrane. The helical transmembrane segment at 68 to 90 (RFIFNLLVTDLLQVALVAPWVVS) threads the bilayer. Residues 91–106 (TAIPFFWPLNIHFCTA) lie on the Extracellular side of the membrane. Cysteines 104 and 182 form a disulfide. Residues 107-127 (LVSLTHLFAFASVNTIVVVSV) form a helical membrane-spanning segment. Residues 128–149 (DRYLTIIHPLSYPSKMTNRRSY) are Cytoplasmic-facing. The helical transmembrane segment at 150 to 170 (ILLYGTWIAAFLQSTPPLYGW) threads the bilayer. Over 171-196 (GHATFDDRNAFCSMIWGASPAYTVVS) the chain is Extracellular. The chain crosses the membrane as a helical span at residues 197-217 (VVSFLVIPLGVMIACYSVVFG). The Cytoplasmic segment spans residues 218 to 398 (AARRQQALLY…PPCYECKAAR (181 aa)). The segment covering 240-261 (DSVVHENEEGAKKRDEFQDKNE) has biased composition (basic and acidic residues). Disordered regions lie at residues 240 to 315 (DSVV…EVSN) and 367 to 386 (EAMR…TSDP). The span at 376-385 (PPSRRNSTSD) shows a compositional bias: polar residues. Residues 399–419 (VIFVIISTYVLSLGPYCFLAV) traverse the membrane as a helical segment. The Extracellular segment spans residues 420-432 (LAVWVDIDTRVPQ). Residues 433–453 (WVITIIIWLFFLQCCIHPYVY) traverse the membrane as a helical segment. Residues 454 to 511 (GYMHKSIKKEIQEVLKKLICKKSPPVEDSHPDLHETEAGTEGGIEGKAVPSHDSATSP) lie on the Cytoplasmic side of the membrane. Positions 476–511 (SPPVEDSHPDLHETEAGTEGGIEGKAVPSHDSATSP) are disordered. Residues 477–490 (PPVEDSHPDLHETE) are compositionally biased toward basic and acidic residues.

The protein belongs to the G-protein coupled receptor 1 family. As to expression, expressed in the brain in hypothalamus.

It is found in the cell membrane. In terms of biological role, orphan receptor. The chain is Probable G-protein coupled receptor 101 (Gpr101) from Mus musculus (Mouse).